We begin with the raw amino-acid sequence, 201 residues long: Recombination protein RecR (201 aa).

Residues 60 to 75 form a C4-type zinc finger; sequence CHACGNVDTSDPCTIC. In terms of domain architecture, Toprim spans 83 to 178; the sequence is TTLVVVEDVS…TITRLAHGVP (96 aa).

It belongs to the RecR family.

In terms of biological role, may play a role in DNA repair. It seems to be involved in an RecBC-independent recombinational process of DNA repair. It may act with RecF and RecO. This is Recombination protein RecR from Methylorubrum populi (strain ATCC BAA-705 / NCIMB 13946 / BJ001) (Methylobacterium populi).